A 227-amino-acid polypeptide reads, in one-letter code: KH domain-containing protein MJ0443 (227 aa).

KH domains lie at 14–77 (KSIE…RDIV) and 106–163 (DYAS…KEAV).

This Methanocaldococcus jannaschii (strain ATCC 43067 / DSM 2661 / JAL-1 / JCM 10045 / NBRC 100440) (Methanococcus jannaschii) protein is KH domain-containing protein MJ0443.